The chain runs to 156 residues: Large ribosomal subunit protein uL15 (156 aa).

The interval 25–49 is disordered; that stretch reads RGIGCGKGKTSGRGHKGQKARSGTS. The span at 34–43 shows a compositional bias: basic residues; it reads TSGRGHKGQK.

It belongs to the universal ribosomal protein uL15 family. In terms of assembly, part of the 50S ribosomal subunit.

Binds to the 23S rRNA. The sequence is that of Large ribosomal subunit protein uL15 from Wolbachia sp. subsp. Brugia malayi (strain TRS).